Here is a 287-residue protein sequence, read N- to C-terminus: CRISPR-associated endoribonuclease Cas6 1 (287 aa).

The protein belongs to the CRISPR-associated endoribonuclease Cas6 family. Part of the aCascade ribonucleoprotein complex, minimally composed of Csa2 and Cas5a, which binds crRNA. Other possible components of aCascade in strain P1 are Cas6b (SSO1437) and Csa5 (SSO1443), while SSO1399, Cas5b (SSO1400) and SSO1401 have sometimes been seen weakly associated. Csa2 is probably the major RNA-binding subunit. The Csa2-Cas5a-crRNA complex also binds target DNA homologous to crRNA, probably forming an R-loop. Purified aCascade forms a filament about 6 nm in width.

Functionally, CRISPR (clustered regularly interspaced short palindromic repeat) is an adaptive immune system that provides protection against mobile genetic elements (viruses, transposable elements and conjugative plasmids). CRISPR clusters contain spacers, sequences complementary to antecedent mobile elements, and target invading nucleic acids. CRISPR clusters are transcribed and processed into CRISPR RNA (crRNA). In Saccharolobus solfataricus (strain ATCC 35092 / DSM 1617 / JCM 11322 / P2) (Sulfolobus solfataricus), this protein is CRISPR-associated endoribonuclease Cas6 1 (cas6a).